Reading from the N-terminus, the 214-residue chain is Thymidylate kinase (214 aa).

Gly10–Ser17 is an ATP binding site.

Belongs to the thymidylate kinase family.

The catalysed reaction is dTMP + ATP = dTDP + ADP. Functionally, phosphorylation of dTMP to form dTDP in both de novo and salvage pathways of dTTP synthesis. The protein is Thymidylate kinase of Brucella suis (strain ATCC 23445 / NCTC 10510).